Consider the following 642-residue polypeptide: MPVITLPDGSQRHYDHAVSPMDVALDIGPGLAKACIAGRVNGELVDACDLIENDAQLSIITAKDEDGLEIIRHSCAHLLGHAIKQLWPHTKMAIGPVIDNGFYYDVDLDRTLTQEDVEALEKRMHELAEKNYDVIKKKVSWHEARETFANRGESYKVSILDENIAHDDKPGLYFHEEYVDMCRGPHVPNMRFCHHFKLMKTAGAYWRGDSNNKMLQRIYGTAWADKKALNAYLQRLEEAAKRDHRKIGKQLDLYHMQEEAPGMVFWHNDGWTIFRELEVFVRSKLKEYQYQEVKGPFMMDRVLWEKTGHWDNYKDAMFTTSSENREYCIKPMNCPGHVQIFNQGLKSYRDLPLRMAEFGSCHRNEPSGSLHGLMRVRGFTQDDAHIFCTEEQIRDEVNGCIRLVYDMYSTFGFEKIVVKLSTRPEKRIGSDEMWDRAEADLAVALEENNIPFEYQLGEGAFYGPKIEFTLYDCLDRAWQCGTVQLDFSLPSRLSASYVGEDNERKVPVMIHRAILGSMERFIGILTEEFAGFFPTWLAPVQVVIMNITDSQSDYVNELTQKLSNAGIRVKADLRNEKIGFKIREHTLRRVPYMLVCGDKEVESGKVAVRTRRGKDLGSMDVNEVIEKLQQEIRSRSLKQLEE.

One can recognise a TGS domain in the interval 1 to 61 (MPVITLPDGS…ENDAQLSIIT (61 aa)). Residues 243–534 (DHRKIGKQLD…LTEEFAGFFP (292 aa)) are catalytic. Lysine 286 bears the N6-acetyllysine mark. Cysteine 334, histidine 385, and histidine 511 together coordinate Zn(2+).

This sequence belongs to the class-II aminoacyl-tRNA synthetase family. As to quaternary structure, homodimer. Requires Zn(2+) as cofactor.

The protein localises to the cytoplasm. The enzyme catalyses tRNA(Thr) + L-threonine + ATP = L-threonyl-tRNA(Thr) + AMP + diphosphate + H(+). Its function is as follows. Catalyzes the attachment of threonine to tRNA(Thr) in a two-step reaction: L-threonine is first activated by ATP to form Thr-AMP and then transferred to the acceptor end of tRNA(Thr). Also edits incorrectly charged L-seryl-tRNA(Thr). The sequence is that of Threonine--tRNA ligase from Escherichia coli O9:H4 (strain HS).